Consider the following 255-residue polypeptide: Postacrosomal sheath WW domain-binding protein (255 aa).

A GRAM domain is found at 15-87; sequence LIPNGESLLK…DLITNLTVEQ (73 aa). 7 repeat units span residues 139–145, 146–152, 153–159, 160–166, 167–173, 174–180, and 202–208. The interval 139-208 is 6 X 7 AA tandem repeat of Y-G-X-P-P-X-G; the sequence is YGAPPAGYGA…PAGYGAPPLG (70 aa). The PPxY motif motif lies at 171-174; the sequence is PPGY. Disordered regions lie at residues 180–199 and 204–255; these read GYGA…RASP and APPL…ASSS.

In terms of biological role, may play a role in meiotic resumption and pronuclear formation, mediated by a WW domain-signaling pathway during fertilization. In Macaca fascicularis (Crab-eating macaque), this protein is Postacrosomal sheath WW domain-binding protein (WBP2NL).